The chain runs to 64 residues: Gallinacin-2 (64 aa).

The signal sequence occupies residues 1–22 (MRILYLLFSLLFLALQVSPGLS). Positions 23–28 (SPRRDM) are excised as a propeptide. Disulfide bonds link C31–C57, C36–C51, and C41–C58.

In terms of tissue distribution, expressed in circulating heterophil granulocytes and bone marrow (at protein level). Strong expression in the bone marrow, lung and testis. Moderate expression in the bursa and intestine. Low expression in the cloaca, gall bladder, brain, pancreas, trachea, air sacs and spleen. Expressed in the vagina, ovarian stroma and the theca layer of the ovarian follicle, but not in the granulosa layer of the ovarian follicle.

It is found in the secreted. The protein localises to the cytoplasmic granule. Functionally, potent antibacterial activity against the Gram-negative bacterium E.coli ML-35, and against the Gram-positive bacterium L.monocytogenes EGD. Lacks antifungal activity against C.albicans. The polypeptide is Gallinacin-2 (GAL2) (Gallus gallus (Chicken)).